Consider the following 221-residue polypeptide: H-2 class II histocompatibility antigen, A-Q alpha chain (221 aa).

Positions 1 to 76 are alpha-1; the sequence is GIVVYQSPGD…KRSNFTPATN (76 aa). Topologically, residues 1–183 are extracellular; that stretch reads GIVVYQSPGD…IPAPMSELTE (183 aa). Residues 77–170 are alpha-2; it reads EAPQATVFPK…GLDEPVLKHW (94 aa). Positions 79-171 constitute an Ig-like C1-type domain; the sequence is PQATVFPKSP…LDEPVLKHWE (93 aa). Residues C99 and C155 are joined by a disulfide bond. A glycan (N-linked (GlcNAc...) asparagine) is linked at N110. The interval 171–183 is connecting peptide; that stretch reads EPEIPAPMSELTE. The chain crosses the membrane as a helical span at residues 184–209; that stretch reads TVVCALGLSVGLVGIVVGTIFIIQGL. Residues 210–221 lie on the Cytoplasmic side of the membrane; the sequence is RSGGTSRPPGPL.

It belongs to the MHC class II family.

It localises to the membrane. This is H-2 class II histocompatibility antigen, A-Q alpha chain (H2-Aa) from Mus musculus (Mouse).